Consider the following 285-residue polypeptide: Undecaprenyl-diphosphatase 2 (285 aa).

A run of 8 helical transmembrane segments spans residues 5 to 25 (MDLL…LLPV), 47 to 67 (MTFL…VYFW), 86 to 106 (WYVL…QSLI), 122 to 142 (LFSN…LIIL), 156 to 176 (LPSA…RGFS), 198 to 218 (FSFA…LVRL), 235 to 255 (SLLL…LLAL), and 265 to 285 (GRWY…LTLA).

This sequence belongs to the UppP family.

It localises to the cell inner membrane. It carries out the reaction di-trans,octa-cis-undecaprenyl diphosphate + H2O = di-trans,octa-cis-undecaprenyl phosphate + phosphate + H(+). Catalyzes the dephosphorylation of undecaprenyl diphosphate (UPP). Confers resistance to bacitracin. The polypeptide is Undecaprenyl-diphosphatase 2 (Acinetobacter baylyi (strain ATCC 33305 / BD413 / ADP1)).